We begin with the raw amino-acid sequence, 227 residues long: Endo-1,4-beta-xylanase 11A (227 aa).

Residues 1–36 (MVSASSLLLAASAIAGVFSAPAAAPVSENLNVLQER) form the signal peptide. Residues 37 to 227 (ALTSSATGTS…SSGSASITVS (191 aa)) enclose the GH11 domain. Positions 112 to 136 (VYGWTTSPLIEYYIVEDFGTYDPSS) are necrosis inducing domain. Glutamate 122 acts as the Nucleophile in catalysis. Glutamate 214 serves as the catalytic Proton donor.

This sequence belongs to the glycosyl hydrolase 11 (cellulase G) family.

It is found in the secreted. It catalyses the reaction Endohydrolysis of (1-&gt;4)-beta-D-xylosidic linkages in xylans.. The protein operates within glycan degradation; xylan degradation. With respect to regulation, significantly inhibited by the wheat xylanase inhibiting protein I (XIP-I) and the proteinaceous endoxylanase Triticum aestivum xylanase inhibitors I (TAXI-I), whereas no inhibition is detected with TAXI-II. Its function is as follows. Endo-1,4-beta-xylanase involved in the hydrolysis of xylan, a major structural heterogeneous polysaccharide found in plant biomass representing the second most abundant polysaccharide in the biosphere, after cellulose. Required for plant infection and the appearance of secondary lesions. Is able to induce necrosis on leaves, seedling growth inhibition, induction of a ROS burst, electrolyte leakage, cytoplasm shrinkage, autofluorescence, cell death, and induction of defense genes, and this abilities are independent of the catalytic activity. Only exhibits elicitor activity in certain plants such as tomato, but not in N.benthamiana. The sequence is that of Endo-1,4-beta-xylanase 11A from Botryotinia fuckeliana (strain B05.10) (Noble rot fungus).